The sequence spans 430 residues: MAEGEDVGWWRSWLQQSYQAVKEKSSEALEFMKRDLTEFTQVVQHDTACTIAATASVVKEKLATEGSSGATEKMKKGLSDFLGVISDTFAPSPDKTIDCDVITLMGTPSGTAEPYDGTKARLYSLQSDPATYCNEPDGPPELFDAWLSQFCLEEKKGEISELLVGSPSIRALYTKMVPAAVSHSEFWHRYFYKVHQLEQEQARRDALKQRAEQSISEEPGWEEEEEELMGISPISPKEAKVPVAKISTFPEGEPGPQSPCEENLVTSVEPPAEVTPSESSESISLVTQIANPATAPEARVLPKDLSQKLLEASLEEQGLAVDVGETGPSPPIHSKPLTPAGHTGGPEPRPPARVETLREEAPTDLRVFELNSDSGKSTPSNNGKKGSSTDISEDWEKDFDLDMTEEEVQMALSKVDASGELEDVEWEDWE.

Residues Ser92 and Ser166 each carry the phosphoserine modification. Positions Trp146–Glu198 constitute a BSD domain. 2 disordered regions span residues Ser247–Ala298 and Leu319–Asp398. Residues Pro276–Asn291 are compositionally biased toward polar residues. The segment covering Pro350–Val367 has biased composition (basic and acidic residues). At Thr356 the chain carries Phosphothreonine. Residues Asn371 to Asp390 show a composition bias toward polar residues. Phosphoserine occurs at positions 387, 388, and 418.

This is BSD domain-containing protein 1 (BSDC1) from Homo sapiens (Human).